The sequence spans 107 residues: Homeobox protein HD-3 (107 aa).

A DNA-binding region (homeobox) is located at residues 6–65 (SKAPRTRMTAGQTRVLMSFFKDNPFPSTTAREKLSKVLGVGPRTVQIWFQNQRQKARGQA).

The protein resides in the nucleus. The polypeptide is Homeobox protein HD-3 (HD-3) (Encephalitozoon cuniculi (strain GB-M1) (Microsporidian parasite)).